Consider the following 256-residue polypeptide: Imidazole glycerol phosphate synthase subunit HisF (256 aa).

Active-site residues include Asp11 and Asp130.

Belongs to the HisA/HisF family. As to quaternary structure, heterodimer of HisH and HisF.

Its subcellular location is the cytoplasm. The enzyme catalyses 5-[(5-phospho-1-deoxy-D-ribulos-1-ylimino)methylamino]-1-(5-phospho-beta-D-ribosyl)imidazole-4-carboxamide + L-glutamine = D-erythro-1-(imidazol-4-yl)glycerol 3-phosphate + 5-amino-1-(5-phospho-beta-D-ribosyl)imidazole-4-carboxamide + L-glutamate + H(+). Its pathway is amino-acid biosynthesis; L-histidine biosynthesis; L-histidine from 5-phospho-alpha-D-ribose 1-diphosphate: step 5/9. In terms of biological role, IGPS catalyzes the conversion of PRFAR and glutamine to IGP, AICAR and glutamate. The HisF subunit catalyzes the cyclization activity that produces IGP and AICAR from PRFAR using the ammonia provided by the HisH subunit. This is Imidazole glycerol phosphate synthase subunit HisF from Cupriavidus necator (strain ATCC 17699 / DSM 428 / KCTC 22496 / NCIMB 10442 / H16 / Stanier 337) (Ralstonia eutropha).